A 420-amino-acid chain; its full sequence is Serine hydroxymethyltransferase (420 aa).

Residues Leu-121 and Gly-125–Leu-127 each bind (6S)-5,6,7,8-tetrahydrofolate. N6-(pyridoxal phosphate)lysine is present on Lys-229.

This sequence belongs to the SHMT family. Homodimer. It depends on pyridoxal 5'-phosphate as a cofactor.

The protein resides in the cytoplasm. The enzyme catalyses (6R)-5,10-methylene-5,6,7,8-tetrahydrofolate + glycine + H2O = (6S)-5,6,7,8-tetrahydrofolate + L-serine. Its pathway is one-carbon metabolism; tetrahydrofolate interconversion. It participates in amino-acid biosynthesis; glycine biosynthesis; glycine from L-serine: step 1/1. Catalyzes the reversible interconversion of serine and glycine with tetrahydrofolate (THF) serving as the one-carbon carrier. This reaction serves as the major source of one-carbon groups required for the biosynthesis of purines, thymidylate, methionine, and other important biomolecules. Also exhibits THF-independent aldolase activity toward beta-hydroxyamino acids, producing glycine and aldehydes, via a retro-aldol mechanism. In Glaesserella parasuis serovar 5 (strain SH0165) (Haemophilus parasuis), this protein is Serine hydroxymethyltransferase.